The sequence spans 415 residues: Serine hydroxymethyltransferase (415 aa).

Residues L122 and 126–128 (GHL) contribute to the (6S)-5,6,7,8-tetrahydrofolate site. K230 is modified (N6-(pyridoxal phosphate)lysine).

The protein belongs to the SHMT family. In terms of assembly, homodimer. Requires pyridoxal 5'-phosphate as cofactor.

Its subcellular location is the cytoplasm. The catalysed reaction is (6R)-5,10-methylene-5,6,7,8-tetrahydrofolate + glycine + H2O = (6S)-5,6,7,8-tetrahydrofolate + L-serine. It participates in one-carbon metabolism; tetrahydrofolate interconversion. It functions in the pathway amino-acid biosynthesis; glycine biosynthesis; glycine from L-serine: step 1/1. In terms of biological role, catalyzes the reversible interconversion of serine and glycine with tetrahydrofolate (THF) serving as the one-carbon carrier. This reaction serves as the major source of one-carbon groups required for the biosynthesis of purines, thymidylate, methionine, and other important biomolecules. Also exhibits THF-independent aldolase activity toward beta-hydroxyamino acids, producing glycine and aldehydes, via a retro-aldol mechanism. This chain is Serine hydroxymethyltransferase, found in Cupriavidus necator (strain ATCC 17699 / DSM 428 / KCTC 22496 / NCIMB 10442 / H16 / Stanier 337) (Ralstonia eutropha).